A 240-amino-acid chain; its full sequence is 2,3,4,5-tetrahydropyridine-2,6-dicarboxylate N-acetyltransferase (240 aa).

Belongs to the transferase hexapeptide repeat family. DapH subfamily.

It catalyses the reaction (S)-2,3,4,5-tetrahydrodipicolinate + acetyl-CoA + H2O = L-2-acetamido-6-oxoheptanedioate + CoA. It functions in the pathway amino-acid biosynthesis; L-lysine biosynthesis via DAP pathway; LL-2,6-diaminopimelate from (S)-tetrahydrodipicolinate (acetylase route): step 1/3. Its function is as follows. Catalyzes the transfer of an acetyl group from acetyl-CoA to tetrahydrodipicolinate. The polypeptide is 2,3,4,5-tetrahydropyridine-2,6-dicarboxylate N-acetyltransferase (Bacillus anthracis (strain A0248)).